The following is a 94-amino-acid chain: MTINYQFGDVDAHGAMIRAQAGLLEAEHQAIIRDVLTASDFWGGAGSAACQGFITQLGRNFQVIYEQANAHGQKVQAAGNNMAQTDSAVGSSWA.

This sequence belongs to the WXG100 family. ESAT-6 subfamily. As to quaternary structure, strongly interacts with EsxK to form a heterodimeric complex under reducing conditions. The complex is regulated by the redox state of EsxL.

The protein resides in the secreted. Functionally, induces apoptosis of host cells. Is immunogenic with highly specific seroreactivity towards TB patients' serum. This chain is ESAT-6-like protein EsxL, found in Mycobacterium tuberculosis (strain ATCC 25618 / H37Rv).